We begin with the raw amino-acid sequence, 198 residues long: HTH-type transcriptional regulator BetI (198 aa).

Residues 8–68 (PLRRRELIDA…ATMRHLLREL (61 aa)) form the HTH tetR-type domain. A DNA-binding region (H-T-H motif) is located at residues 31 to 50 (TVAQIAHEAGVSPALAHHYF).

It participates in amine and polyamine biosynthesis; betaine biosynthesis via choline pathway [regulation]. In terms of biological role, repressor involved in the biosynthesis of the osmoprotectant glycine betaine. It represses transcription of the choline transporter BetT and the genes of BetAB involved in the synthesis of glycine betaine. In Brucella suis (strain ATCC 23445 / NCTC 10510), this protein is HTH-type transcriptional regulator BetI.